A 327-amino-acid chain; its full sequence is Nucleotide-binding protein Mflv_3714 (327 aa).

The segment covering 1–22 (MTRQGMRDDLRGEADSVVHDGT) has biased composition (basic and acidic residues). Residues 1–29 (MTRQGMRDDLRGEADSVVHDGTDDIDNEN) form a disordered region. Position 50–57 (50–57 (GLSGAGRG)) interacts with ATP. Residue 101–104 (DVRS) coordinates GTP.

This sequence belongs to the RapZ-like family.

In terms of biological role, displays ATPase and GTPase activities. The chain is Nucleotide-binding protein Mflv_3714 from Mycolicibacterium gilvum (strain PYR-GCK) (Mycobacterium gilvum (strain PYR-GCK)).